A 531-amino-acid polypeptide reads, in one-letter code: Probable rhamnogalacturonate lyase A (531 aa).

Residues 1–20 (MLSKALFFSSLPLWAKVASA) form the signal peptide. 2 disulfides stabilise this stretch: C50-C93 and C184-C193. N-linked (GlcNAc...) asparagine glycosylation occurs at N351.

Belongs to the polysaccharide lyase 4 family.

The protein resides in the secreted. It catalyses the reaction Endotype eliminative cleavage of L-alpha-rhamnopyranosyl-(1-&gt;4)-alpha-D-galactopyranosyluronic acid bonds of rhamnogalacturonan I domains in ramified hairy regions of pectin leaving L-rhamnopyranose at the reducing end and 4-deoxy-4,5-unsaturated D-galactopyranosyluronic acid at the non-reducing end.. Pectinolytic enzymes consist of four classes of enzymes: pectin lyase, polygalacturonase, pectin methylesterase and rhamnogalacturonase. Degrades the rhamnogalacturonan I (RG-I) backbone of pectin. This Aspergillus terreus (strain NIH 2624 / FGSC A1156) protein is Probable rhamnogalacturonate lyase A (rglA).